The primary structure comprises 88 residues: Alpha-latrotoxin-associated low molecular weight protein-2 (88 aa).

Positions 1–19 are cleaved as a signal peptide; it reads MLKLICIAFLVTVLTLVAG. Q20 bears the Pyrrolidone carboxylic acid mark. Intrachain disulfides connect C30–C66, C46–C62, and C49–C75.

It belongs to the arthropod CHH/MIH/GIH/VIH hormone family. Post-translationally, the N-terminus is blocked. Expressed by the venom gland.

The protein resides in the secreted. Its function is as follows. May increase the toxicity of alpha-latrotoxin and/or other venom components. Is non-toxic to mice and to the cockroach Periplaneta americana. This chain is Alpha-latrotoxin-associated low molecular weight protein-2, found in Latrodectus tredecimguttatus (Mediterranean black widow spider).